The sequence spans 419 residues: MWGLLIFSVLLGGVLAKEDFVGHQVLRISVDDEAQVQKVKELEDLEHLQLDFWRGPARPGFPIDVRVPFPSIQAVKVFLEAHGIRYTIMIEDVQLLLDEEQEQMFASQGRARTTSTFNYATYHTLEEIYDFMDILVAEHPQLVSKLQIGSSYEGRPIYVLKFSTGGNNRPAIWIDTGIHSREWVTQASGVWFAKKITEDYGQDPAFTAILDNLDIFLEIVTNPDGFAFTHSENRMWRKTRSRTSGSFCVGVDPNRNWDAGFGGAGASSNPCSETYHGKFPNSEVEVKSIVDFVNDHGNIKAFISIHSYSQLLLYPYGYKTEAPADKDELDQISKSAVAALTSLYGTKFQYGSIITTIYQASGGTIDWTYNQGIKYSFSFELRDTGRYGFLLPASQIIPTAQETWLALLTIMEHTLNHPY.

Residues 1 to 16 (MWGLLIFSVLLGGVLA) form the signal peptide. Residues 17-110 (KEDFVGHQVL…QEQMFASQGR (94 aa)) constitute a propeptide, activation peptide. The region spanning 121–414 (TYHTLEEIYD…LALLTIMEHT (294 aa)) is the Peptidase M14 domain. Zn(2+) is bound by residues His-179 and Glu-182. Residues 179–182 (HSRE), Arg-237, and 254–255 (NR) each bind substrate. Cysteines 248 and 271 form a disulfide. Residue His-306 coordinates Zn(2+). Residues 307–308 (SY) and Tyr-358 contribute to the substrate site. The active-site Proton donor/acceptor is Glu-380.

The protein belongs to the peptidase M14 family. Monomer. May form a complex with proelastase 2. Requires Zn(2+) as cofactor.

The protein resides in the secreted. The enzyme catalyses Release of a C-terminal amino acid, but little or no action with -Asp, -Glu, -Arg, -Lys or -Pro.. The catalysed reaction is leukotriene C4 + H2O = leukotriene F4 + glycine. Carboxypeptidase that catalyzes the release of a C-terminal amino acid, but has little or no action with -Asp, -Glu, -Arg, -Lys or -Pro. Catalyzes the conversion of leukotriene C4 to leukotriene F4 via the hydrolysis of an amide bond. The sequence is that of Carboxypeptidase A1 (CPA1) from Sus scrofa (Pig).